The chain runs to 169 residues: Secreted RxLR effector protein BLN03 (169 aa).

Residues 1–21 (MRPRKYIVVVLLSIAYTMCLA) form the signal peptide. The short motif at 51 to 54 (TEER) is the dEER element. A helical membrane pass occupies residues 149-169 (GSAFLFVIGFIVLLAFAMTAV).

This sequence belongs to the RxLR effector family. In terms of assembly, interacts with host transcription factor NAC069.

It localises to the secreted. The protein localises to the host membrane. Its function is as follows. Secreted effector that inhibits stress-induced relocalization of the endoplasmic reticulum tail-anchored transcription factors to the nucleus, thus affecting stress responses. In Bremia lactucae (Lettuce downy mildew), this protein is Secreted RxLR effector protein BLN03.